Reading from the N-terminus, the 1138-residue chain is Solute carrier family 12 member 5 (1138 aa).

Disordered regions lie at residues Met-1–Glu-62 and Gln-96–Gln-116. Over Met-1–Ser-98 the chain is Cytoplasmic. A compositionally biased stretch (basic and acidic residues) spans Pro-21–Pro-45. A compositionally biased stretch (polar residues) spans Lys-46 to Thr-55. Thr-57 is subject to Phosphothreonine. The segment covering Ser-98–Lys-111 has biased composition (basic and acidic residues). Residues Arg-99–Met-120 traverse the membrane as a discontinuously helical segment. Lys-113 is a binding site for K(+). The Extracellular portion of the chain corresponds to Gly-121–Pro-129. Residues Cys-130–Gly-151 traverse the membrane as a helical segment. Topologically, residues Ile-152 to Ser-174 are cytoplasmic. Residues Ala-175–Val-203 form a helical membrane-spanning segment. Residue Ala-184 participates in chloride binding. At Gly-204–Tyr-229 the chain is on the extracellular side. Helical transmembrane passes span Leu-230–Leu-250 and Asn-251–Asn-276. Over Lys-277–Leu-402 the chain is Extracellular. A disulfide bridge connects residues Cys-310 and Cys-325. N-linked (GlcNAc...) asparagine glycosylation is found at Asn-314, Asn-333, Asn-351, and Asn-362. Cys-345 and Cys-354 form a disulfide bridge. A helical membrane pass occupies residues Ala-403 to Thr-420. Met-410 contributes to the K(+) binding site. Tyr-414 and Val-415 together coordinate chloride. At Ser-421–Ile-429 the chain is on the cytoplasmic side. Residues Tyr-430–Ser-453 form a helical membrane-spanning segment. Asp-446 lines the K(+) pocket. Residues Ile-454–Leu-485 are Extracellular-facing. The chain crosses the membrane as a helical span at residues Arg-486–Gly-513. Residues Ser-514–Gln-534 lie on the Cytoplasmic side of the membrane. Transmembrane regions (helical) follow at residues Ala-535–Gly-555 and Glu-556–Asp-578. Glu-569 is a binding site for chloride. The Cytoplasmic segment spans residues Glu-579–Tyr-592. Transmembrane regions (helical) follow at residues Met-593–Arg-615 and Tyr-616–Leu-632. Residues Met-633 to Ser-1138 lie on the Cytoplasmic side of the membrane. The tract at residues Gly-667–Leu-681 is scissor helix. Thr-929 is modified (phosphothreonine; by OXSR1 and STK39). Residues His-943–Ile-1051 form a disordered region. The segment covering Thr-945–Gly-962 has biased composition (basic and acidic residues). The span at Thr-982 to Val-994 shows a compositional bias: acidic residues. Low complexity predominate over residues Ser-1001 to Pro-1012. A compositionally biased stretch (basic and acidic residues) spans Glu-1019 to Lys-1041. At Thr-1029 the chain carries Phosphothreonine; by OXSR1 and STK39. Phosphoserine occurs at positions 1044, 1047, and 1048.

The protein belongs to the SLC12A transporter family. K/Cl co-transporter subfamily. Homodimer; adopts a domain-swap conformation at the scissor helices connecting the transmembrane domain and C-terminal domain. Heterodimer with K-Cl cotransporters SLC12A6 and SLC12A7. Interacts with AP2A1. In terms of processing, phosphorylated at Thr-929 and Thr-1029 by OXSR1/OSR1 and STK39/SPAK downstream of WNK kinases (WNK1, WNK2, WNK3 or WNK4), inhibiting the potassium-chloride cotransport activity. In terms of tissue distribution, expressed in brainstem, spinal cord and olfactory bulb of 17 dpc embryos. Expressed in all parts of the brain and spinal cord in postnatal day 14 mice. Expressed in brainstem and spinal cord of 17 dpc embryos. Expressed in all parts of the brain and spinal cord in postnatal day 14 mice.

The protein localises to the cell membrane. Its subcellular location is the cell projection. It is found in the dendrite. It catalyses the reaction K(+)(in) + chloride(in) = K(+)(out) + chloride(out). With respect to regulation, inhibited following phosphorylation by OXSR1/OSR1 and STK39/SPAK: phosphorylation takes place downstream of WNK kinases (WNK1, WNK2, WNK3 or WNK4) in response to hyperosmotic stress and subsequent cell shrinkage. Its function is as follows. Mediates electroneutral potassium-chloride cotransport in mature neurons and is required for neuronal Cl(-) homeostasis. As major extruder of intracellular chloride, it establishes the low neuronal Cl(-) levels required for chloride influx after binding of GABA-A and glycine to their receptors, with subsequent hyperpolarization and neuronal inhibition. Involved in the regulation of dendritic spine formation and maturation. The chain is Solute carrier family 12 member 5 (Slc12a5) from Mus musculus (Mouse).